The sequence spans 180 residues: Large ribosomal subunit protein uL5 (180 aa).

This sequence belongs to the universal ribosomal protein uL5 family. As to quaternary structure, part of the 50S ribosomal subunit; part of the 5S rRNA/L5/L18/L25 subcomplex. Contacts the 5S rRNA and the P site tRNA. Forms a bridge to the 30S subunit in the 70S ribosome.

Its function is as follows. This is one of the proteins that bind and probably mediate the attachment of the 5S RNA into the large ribosomal subunit, where it forms part of the central protuberance. In the 70S ribosome it contacts protein S13 of the 30S subunit (bridge B1b), connecting the 2 subunits; this bridge is implicated in subunit movement. Contacts the P site tRNA; the 5S rRNA and some of its associated proteins might help stabilize positioning of ribosome-bound tRNAs. The sequence is that of Large ribosomal subunit protein uL5 from Roseiflexus castenholzii (strain DSM 13941 / HLO8).